Reading from the N-terminus, the 128-residue chain is MVLPASMRLRGSRCFEHLQKWGYRFYGTSMVLRVIEANPQLLKAPHRHHNSTACRCAVVISSKVSKRAVIRNRLRRLLHDHLRSRLEVAPEHCNHWVLISLKPVASAIEASPLLEECDRLLNQAGLLS.

Belongs to the RnpA family. As to quaternary structure, consists of a catalytic RNA component (M1 or rnpB) and a protein subunit.

It catalyses the reaction Endonucleolytic cleavage of RNA, removing 5'-extranucleotides from tRNA precursor.. Its function is as follows. RNaseP catalyzes the removal of the 5'-leader sequence from pre-tRNA to produce the mature 5'-terminus. It can also cleave other RNA substrates such as 4.5S RNA. The protein component plays an auxiliary but essential role in vivo by binding to the 5'-leader sequence and broadening the substrate specificity of the ribozyme. The protein is Ribonuclease P protein component of Prochlorococcus marinus (strain MIT 9313).